A 271-amino-acid chain; its full sequence is Cobalt import ATP-binding protein CbiO (271 aa).

Residues 2 to 236 (LATSDLWFRY…TEAMEHAGLT (235 aa)) enclose the ABC transporter domain. Residue 34–41 (GANGCGKS) participates in ATP binding.

It belongs to the ABC transporter superfamily. Cobalt importer (TC 3.A.1.18.1) family. In terms of assembly, forms an energy-coupling factor (ECF) transporter complex composed of an ATP-binding protein (A component, CbiO), a transmembrane protein (T component, CbiQ) and 2 possible substrate-capture proteins (S components, CbiM and CbiN) of unknown stoichimetry. Expression of just CbiMN in E.coli confers some cobalt uptake.

It localises to the cell inner membrane. Its pathway is cofactor biosynthesis; adenosylcobalamin biosynthesis. Functionally, part of the energy-coupling factor (ECF) transporter complex CbiMNOQ involved in cobalt import. The complex confers cobalt uptake upon expression in E.coli; can also transport nickel with a very low affinity. Presumably responsible for energy coupling to the transport system. The protein is Cobalt import ATP-binding protein CbiO of Salmonella typhimurium (strain LT2 / SGSC1412 / ATCC 700720).